The sequence spans 340 residues: Functional amyloid subunit FapC (340 aa).

Positions 1–24 (MKATMVLTPLALAMAAVLSVSAYA) are cleaved as a signal peptide. The FapC_R1 repeat unit spans residues 67-100 (NNASVSGSIKDASGNVGVNVAAGDNNQQANAAAL). A linker 1 region spans residues 101 to 133 (ASADASFVFGTATASTSVLQSGYGNTLNNYSNP). The FapC_R2 repeat unit spans residues 134-167 (NTASLSNSANNVSGNLGVNVAAGNFNQQKNDLAA). A linker 2 region spans residues 168–290 (AVSNGQYSTA…AIVGFKTPVT (123 aa)). A FapC_R3 repeat occupies 291–324 (NNASLSNSLQNVSGNVGVNIAAGGGNQQSNSLSI). The short motif at 328 to 331 (CSSC) is the Cys-X-X-Cys element.

Belongs to the FapB/FapC family. In terms of assembly, the major component of purified amyloid fibrils. Fibrils are resistant to boiling in 2% (weight/vol) SDS and require &gt;90% (vol/vol) formic acid to dissolve. Interacts with FapA in vitro.

The protein localises to the fimbrium. It localises to the secreted. In terms of biological role, the major functional amyloid subunit in this bacterium. Upon overexpression of the endogenous six-gene locus (fapA-fapF), cells form large clumps during liquid growth, make large amounts of biofilm and produce amyloid fibrils. This is Functional amyloid subunit FapC from Pseudomonas aeruginosa (strain ATCC 15692 / DSM 22644 / CIP 104116 / JCM 14847 / LMG 12228 / 1C / PRS 101 / PAO1).